Reading from the N-terminus, the 503-residue chain is Na(+)-translocating NADH-quinone reductase subunit B (503 aa).

5 consecutive transmembrane segments (helical) span residues 55-75, 94-114, 120-140, 161-181, and 186-206; these read MMLV…NSGV, ISGF…FSIL, IFLP…VLFA, TLPP…GVVV, and FGGT…FLFF. Position 248 is an FMN phosphoryl threonine (Thr-248). The next 5 membrane-spanning stretches (helical) occupy residues 361–381, 387–407, 417–437, 452–472, and 475–495; these read TSTF…IASW, FGIG…LIVG, FFIP…LVFM, WIYG…NPAY, and GVML…YFAV.

The protein belongs to the NqrB/RnfD family. As to quaternary structure, composed of six subunits; NqrA, NqrB, NqrC, NqrD, NqrE and NqrF. The cofactor is FMN.

The protein resides in the cell inner membrane. It carries out the reaction a ubiquinone + n Na(+)(in) + NADH + H(+) = a ubiquinol + n Na(+)(out) + NAD(+). NQR complex catalyzes the reduction of ubiquinone-1 to ubiquinol by two successive reactions, coupled with the transport of Na(+) ions from the cytoplasm to the periplasm. NqrA to NqrE are probably involved in the second step, the conversion of ubisemiquinone to ubiquinol. The polypeptide is Na(+)-translocating NADH-quinone reductase subunit B (Chlamydia caviae (strain ATCC VR-813 / DSM 19441 / 03DC25 / GPIC) (Chlamydophila caviae)).